Consider the following 423-residue polypeptide: UDP-N-acetylglucosamine 1-carboxyvinyltransferase 2 (423 aa).

23-24 (KN) serves as a coordination point for phosphoenolpyruvate. Residue Arg-93 coordinates UDP-N-acetyl-alpha-D-glucosamine. The active-site Proton donor is Cys-117. The residue at position 117 (Cys-117) is a 2-(S-cysteinyl)pyruvic acid O-phosphothioketal. Residues 122–126 (RPIDQ), Asp-305, and Ile-327 each bind UDP-N-acetyl-alpha-D-glucosamine.

The protein belongs to the EPSP synthase family. MurA subfamily.

The protein localises to the cytoplasm. The catalysed reaction is phosphoenolpyruvate + UDP-N-acetyl-alpha-D-glucosamine = UDP-N-acetyl-3-O-(1-carboxyvinyl)-alpha-D-glucosamine + phosphate. Its pathway is cell wall biogenesis; peptidoglycan biosynthesis. Its function is as follows. Cell wall formation. Adds enolpyruvyl to UDP-N-acetylglucosamine. The protein is UDP-N-acetylglucosamine 1-carboxyvinyltransferase 2 of Listeria monocytogenes serovar 1/2a (strain ATCC BAA-679 / EGD-e).